A 272-amino-acid polypeptide reads, in one-letter code: ATP synthase subunit a (272 aa).

Helical transmembrane passes span 41–61 (TLNI…LVLF), 101–121 (LIAP…LMDL), 147–167 (DVNI…FYSI), 212–232 (LFGN…LLPW), and 243–263 (AIFH…LTIV).

Belongs to the ATPase A chain family. F-type ATPases have 2 components, CF(1) - the catalytic core - and CF(0) - the membrane proton channel. CF(1) has five subunits: alpha(3), beta(3), gamma(1), delta(1), epsilon(1). CF(0) has three main subunits: a(1), b(2) and c(9-12). The alpha and beta chains form an alternating ring which encloses part of the gamma chain. CF(1) is attached to CF(0) by a central stalk formed by the gamma and epsilon chains, while a peripheral stalk is formed by the delta and b chains.

The protein localises to the cell inner membrane. Functionally, key component of the proton channel; it plays a direct role in the translocation of protons across the membrane. The chain is ATP synthase subunit a from Cronobacter sakazakii (strain ATCC BAA-894) (Enterobacter sakazakii).